Here is a 398-residue protein sequence, read N- to C-terminus: Steroid C26-monooxygenase (398 aa).

Cysteine 340 contacts heme.

This sequence belongs to the cytochrome P450 family. Heme serves as cofactor.

The enzyme catalyses cholest-4-en-3-one + 6 reduced [2Fe-2S]-[ferredoxin] + 3 O2 + 5 H(+) = (25R)-3-oxocholest-4-en-26-oate + 6 oxidized [2Fe-2S]-[ferredoxin] + 4 H2O. It carries out the reaction cholest-4-en-3-one + 2 reduced [2Fe-2S]-[ferredoxin] + O2 + 2 H(+) = (25R)-3-oxocholest-4-en-26-ol + 2 oxidized [2Fe-2S]-[ferredoxin] + H2O. The catalysed reaction is (25R)-3-oxocholest-4-en-26-ol + 2 reduced [2Fe-2S]-[ferredoxin] + O2 + 2 H(+) = (25R)-3-oxocholest-4-en-26-al + 2 oxidized [2Fe-2S]-[ferredoxin] + 2 H2O. It catalyses the reaction (25R)-3-oxocholest-4-en-26-al + 2 reduced [2Fe-2S]-[ferredoxin] + O2 + H(+) = (25R)-3-oxocholest-4-en-26-oate + 2 oxidized [2Fe-2S]-[ferredoxin] + H2O. The enzyme catalyses cholesterol + NADPH + O2 + H(+) = 26-hydroxycholesterol + NADP(+) + H2O. It carries out the reaction 26-hydroxycholesterol + 2 reduced [2Fe-2S]-[ferredoxin] + O2 + 2 H(+) = (3beta)-hydroxy-cholest-5-en-26-al + 2 oxidized [2Fe-2S]-[ferredoxin] + 2 H2O. The catalysed reaction is (3beta)-hydroxy-cholest-5-en-26-al + NADPH + O2 = (3beta)-hydroxy-cholest-5-en-26-oate + NADP(+) + H2O. It catalyses the reaction (25S)-3-oxocholest-4-en-26-ol + 2 reduced [2Fe-2S]-[ferredoxin] + O2 + 2 H(+) = (25S)-3-oxocholest-4-en-26-al + 2 oxidized [2Fe-2S]-[ferredoxin] + 2 H2O. The enzyme catalyses (25S)-3-oxocholest-4-en-26-al + 2 reduced [2Fe-2S]-[ferredoxin] + O2 + H(+) = (25S)-3-oxocholest-4-en-26-oate + 2 oxidized [2Fe-2S]-[ferredoxin] + H2O. It participates in steroid metabolism; cholesterol degradation. Its activity is regulated as follows. Inhibited by econazole, clotrimazole and miconazole. Its function is as follows. Involved in the utilization of cholesterol as the sole carbon and energy source by degrading the side chain during infection. Primarily catalyzes the sequential oxidation of the terminal methyl of cholest-4-en-3-one into (25R)-26-hydroxycholest-4-en-3-one (alcohol), (25R)-26-oxocholest-4-en-3-one (aldehyde), to finally yield the carboxylic acid (25R)-3-oxocholest-4-en-26-oate. In vitro, Cyp142 catalyzes with equal preference the oxidation of both (25R)- and (25S)-26-hydroxycholest-4-en-3-one diastereomers to the corresponding carboxylic acid which is a prerequisite for entry into the beta-oxidation pathway. Also able to sequentially oxidize cholesterol itself, not only cholest-4-en-3-one. This chain is Steroid C26-monooxygenase (cyp142), found in Mycobacterium tuberculosis (strain ATCC 25618 / H37Rv).